Here is a 148-residue protein sequence, read N- to C-terminus: Aspartate carbamoyltransferase regulatory chain (148 aa).

The Zn(2+) site is built by Cys106, Cys111, Cys134, and Cys137.

This sequence belongs to the PyrI family. Contains catalytic and regulatory chains. The cofactor is Zn(2+).

Its function is as follows. Involved in allosteric regulation of aspartate carbamoyltransferase. In Methanococcus maripaludis (strain DSM 14266 / JCM 13030 / NBRC 101832 / S2 / LL), this protein is Aspartate carbamoyltransferase regulatory chain.